Reading from the N-terminus, the 618-residue chain is 1-deoxy-D-xylulose-5-phosphate synthase (618 aa).

Thiamine diphosphate is bound by residues histidine 73 and 114–116 (GHS). Residue aspartate 145 coordinates Mg(2+). Thiamine diphosphate is bound by residues 146 to 147 (GA), asparagine 174, tyrosine 284, and glutamate 364. Asparagine 174 serves as a coordination point for Mg(2+).

Belongs to the transketolase family. DXPS subfamily. In terms of assembly, homodimer. Mg(2+) serves as cofactor. Requires thiamine diphosphate as cofactor.

The enzyme catalyses D-glyceraldehyde 3-phosphate + pyruvate + H(+) = 1-deoxy-D-xylulose 5-phosphate + CO2. Its pathway is metabolic intermediate biosynthesis; 1-deoxy-D-xylulose 5-phosphate biosynthesis; 1-deoxy-D-xylulose 5-phosphate from D-glyceraldehyde 3-phosphate and pyruvate: step 1/1. Its function is as follows. Catalyzes the acyloin condensation reaction between C atoms 2 and 3 of pyruvate and glyceraldehyde 3-phosphate to yield 1-deoxy-D-xylulose-5-phosphate (DXP). In Clostridium beijerinckii (strain ATCC 51743 / NCIMB 8052) (Clostridium acetobutylicum), this protein is 1-deoxy-D-xylulose-5-phosphate synthase.